Here is a 1059-residue protein sequence, read N- to C-terminus: Putative ATP-dependent RNA helicase BoYb (1059 aa).

The short motif at 54-82 is the Q motif element; the sequence is RRFAEVSLLPDILETMRNLGLNRLLRLQS. Residues 87-284 form the Helicase ATP-binding domain; that stretch reads HLAGGSGHGA…RAVNDKPALV (198 aa). An ATP-binding site is contributed by 100 to 107; it reads GSPASGRT. The DEAD box motif lies at 230–233; the sequence is DDVD. One can recognise a Tudor domain in the interval 575-639; it reads PPVAGAICMY…GKLFECPEAL (65 aa). A disordered region spans residues 756-787; it reads VQDSKEKANSKPHEKMKGKMTDQPAKLQSQPP. Basic and acidic residues predominate over residues 757 to 775; that stretch reads QDSKEKANSKPHEKMKGKM.

The protein localises to the cytoplasm. The enzyme catalyses ATP + H2O = ADP + phosphate + H(+). In terms of biological role, involved in primary piRNA biogenesis in germline cells. This is Putative ATP-dependent RNA helicase BoYb (BoYb) from Drosophila melanogaster (Fruit fly).